Consider the following 605-residue polypeptide: Anaerobic ribonucleoside-triphosphate reductase (605 aa).

DCTP-binding residues include His-64 and His-66. Positions 64, 66, 67, 100, and 103 each coordinate dGTP. DCTP is bound by residues Glu-100, Lys-103, Gln-114, Lys-146, and 445 to 448; that span reads AENL. DATP is bound by residues Glu-100, Lys-103, Gln-114, and Lys-146. Glu-100 is a binding site for dTTP. DTTP is bound by residues Gln-114 and Lys-146. Positions 146, 447, and 448 each coordinate dGTP. The Glycine radical domain occupies 482-605; it reads ENITPFEKIS…KEIMHRVKHQ (124 aa). Zn(2+) contacts are provided by Cys-543, Cys-546, Cys-561, and Cys-564. Gly-580 carries the glycine radical modification.

The protein belongs to the anaerobic ribonucleoside-triphosphate reductase family. Homodimer. Forms a tetramer composed of two NrdD and two NrdG subunits.

It catalyses the reaction a ribonucleoside 5'-triphosphate + formate + H(+) = a 2'-deoxyribonucleoside 5'-triphosphate + CO2 + H2O. With respect to regulation, activated under anaerobic conditions by NrdG, a tightly associated activase. Activation involves the formation of a glycyl radical at Gly-580. In terms of biological role, catalyzes the conversion of ribonucleotides into deoxyribonucleotides, which are required for DNA synthesis and repair. This Enterobacteria phage T4 (Bacteriophage T4) protein is Anaerobic ribonucleoside-triphosphate reductase.